Consider the following 204-residue polypeptide: Cobalt-containing nitrile hydratase subunit alpha (204 aa).

4 residues coordinate Co(2+): Cys-108, Cys-111, Ser-112, and Cys-113. Cys-111 carries the post-translational modification Cysteine sulfinic acid (-SO2H). Cys-113 bears the Cysteine sulfenic acid (-SOH) mark.

The protein belongs to the nitrile hydratase subunit alpha family. Heterotetramer of two alpha and two beta chains. It depends on Co(2+) as a cofactor.

It carries out the reaction an aliphatic primary amide = an aliphatic nitrile + H2O. NHase catalyzes the hydration of various nitrile compounds to the corresponding amides. In Pseudonocardia thermophila, this protein is Cobalt-containing nitrile hydratase subunit alpha.